A 252-amino-acid polypeptide reads, in one-letter code: 5'-nucleotidase SurE (252 aa).

Residues Asp-8, Asp-9, Ser-39, and Asn-91 each contribute to the a divalent metal cation site.

The protein belongs to the SurE nucleotidase family. The cofactor is a divalent metal cation.

The protein localises to the cytoplasm. It catalyses the reaction a ribonucleoside 5'-phosphate + H2O = a ribonucleoside + phosphate. Functionally, nucleotidase that shows phosphatase activity on nucleoside 5'-monophosphates. This is 5'-nucleotidase SurE from Paraburkholderia xenovorans (strain LB400).